The following is a 63-amino-acid chain: UPF0434 protein GDI0182/Gdia_2252 (63 aa).

Belongs to the UPF0434 family.

This Gluconacetobacter diazotrophicus (strain ATCC 49037 / DSM 5601 / CCUG 37298 / CIP 103539 / LMG 7603 / PAl5) protein is UPF0434 protein GDI0182/Gdia_2252.